We begin with the raw amino-acid sequence, 340 residues long: Holliday junction branch migration complex subunit RuvB (340 aa).

A large ATPase domain (RuvB-L) region spans residues 4 to 184; the sequence is TDRIVGGQSL…FGIVQRLEFY (181 aa). ATP contacts are provided by residues Arg-24, Gly-65, Lys-68, Thr-69, Thr-70, 131-133, Arg-174, Tyr-184, and Arg-221; that span reads EDF. A Mg(2+)-binding site is contributed by Thr-69. Positions 185–255 are small ATPAse domain (RuvB-S); sequence SIEELAQIVT…IADLALNLLE (71 aa). The tract at residues 258–340 is head domain (RuvB-H); the sequence is PLGLDKMDRR…TMPERNLEDE (83 aa). Residues Arg-294, Arg-313, and Arg-318 each contribute to the DNA site.

The protein belongs to the RuvB family. Homohexamer. Forms an RuvA(8)-RuvB(12)-Holliday junction (HJ) complex. HJ DNA is sandwiched between 2 RuvA tetramers; dsDNA enters through RuvA and exits via RuvB. An RuvB hexamer assembles on each DNA strand where it exits the tetramer. Each RuvB hexamer is contacted by two RuvA subunits (via domain III) on 2 adjacent RuvB subunits; this complex drives branch migration. In the full resolvosome a probable DNA-RuvA(4)-RuvB(12)-RuvC(2) complex forms which resolves the HJ.

It is found in the cytoplasm. It catalyses the reaction ATP + H2O = ADP + phosphate + H(+). Its function is as follows. The RuvA-RuvB-RuvC complex processes Holliday junction (HJ) DNA during genetic recombination and DNA repair, while the RuvA-RuvB complex plays an important role in the rescue of blocked DNA replication forks via replication fork reversal (RFR). RuvA specifically binds to HJ cruciform DNA, conferring on it an open structure. The RuvB hexamer acts as an ATP-dependent pump, pulling dsDNA into and through the RuvAB complex. RuvB forms 2 homohexamers on either side of HJ DNA bound by 1 or 2 RuvA tetramers; 4 subunits per hexamer contact DNA at a time. Coordinated motions by a converter formed by DNA-disengaged RuvB subunits stimulates ATP hydrolysis and nucleotide exchange. Immobilization of the converter enables RuvB to convert the ATP-contained energy into a lever motion, pulling 2 nucleotides of DNA out of the RuvA tetramer per ATP hydrolyzed, thus driving DNA branch migration. The RuvB motors rotate together with the DNA substrate, which together with the progressing nucleotide cycle form the mechanistic basis for DNA recombination by continuous HJ branch migration. Branch migration allows RuvC to scan DNA until it finds its consensus sequence, where it cleaves and resolves cruciform DNA. The polypeptide is Holliday junction branch migration complex subunit RuvB (Hydrogenovibrio crunogenus (strain DSM 25203 / XCL-2) (Thiomicrospira crunogena)).